A 637-amino-acid polypeptide reads, in one-letter code: Pentatricopeptide repeat-containing protein At1g12300, mitochondrial (637 aa).

A mitochondrion-targeting transit peptide spans 1 to 95; that stretch reads MVKLMIRRLS…PTVIDFSRLF (95 aa). PPR repeat units follow at residues 87-121, 122-156, 157-191, 192-226, 227-261, 262-296, 297-331, 332-366, 367-401, 402-436, 437-471, 472-506, 507-541, 542-576, and 577-611; these read TVIDFSRLFSAIAKTKQYDLVLALCKQMELKGIAH, NLYTLSIMINCFCRCRKLCLAFSAMGKIIKLGYEP, NTITFSTLINGLCLEGRVSEALELVDRMVEMGHKP, DLITINTLVNGLCLSGKEAEAMLLIDKMVEYGCQP, NAVTYGPVLNVMCKSGQTALAMELLRKMEERNIKL, DAVKYSIIIDGLCKHGSLDNAFNLFNEMEMKGITT, NIITYNILIGGFCNAGRWDDGAKLLRDMIKRKINP, NVVTFSVLIDSFVKEGKLREAEELHKEMIHRGIAP, DTITYTSLIDGFCKENHLDKANQMVDLMVSKGCDP, NIRTFNILINGYCKANRIDDGLELFRKMSLRGVVA, DTVTYNTLIQGFCELGKLNVAKELFQEMVSRKVPP, NIVTYKILLDGLCDNGESEKALEIFEKIEKSKMEL, DIGIYNIIIHGMCNASKVDDAWDLFCSLPLKGVKP, GVKTYNIMIGGLCKKGPLSEAELLFRKMEEDGHAP, and DGWTYNILIRAHLGDGDATKSVKLIEELKRCGFSV.

This sequence belongs to the PPR family. P subfamily.

The protein localises to the mitochondrion. This is Pentatricopeptide repeat-containing protein At1g12300, mitochondrial from Arabidopsis thaliana (Mouse-ear cress).